Reading from the N-terminus, the 51-residue chain is uncharacterized protein (51 aa).

2 helical membrane passes run 6–26 (LLGV…ICID) and 28–48 (SSVF…FVLL).

It is found in the host membrane. This is an uncharacterized protein from Enterobacteria phage T4 (Bacteriophage T4).